The sequence spans 389 residues: Probable protein phosphatase 2C 47 (389 aa).

A PPM-type phosphatase domain is found at 76-346 (RSGSFADIGP…DNLTVIVVCF (271 aa)). Residues aspartate 120, glycine 121, aspartate 294, and aspartate 337 each coordinate Mn(2+).

Belongs to the PP2C family. Mg(2+) serves as cofactor. The cofactor is Mn(2+).

It catalyses the reaction O-phospho-L-seryl-[protein] + H2O = L-seryl-[protein] + phosphate. The enzyme catalyses O-phospho-L-threonyl-[protein] + H2O = L-threonyl-[protein] + phosphate. This is Probable protein phosphatase 2C 47 from Oryza sativa subsp. japonica (Rice).